The chain runs to 190 residues: dCTP deaminase, dUMP-forming (190 aa).

DCTP-binding positions include 101-106, Asp119, 127-129, Gln148, Tyr162, and Gln174; these read KSSLGR and TLE. Glu129 serves as the catalytic Proton donor/acceptor. The interval 163 to 190 is disordered; it reads GSTRVGSKYQGQRGPTPSRSYQNFITST. Residues 171 to 190 are compositionally biased toward polar residues; it reads YQGQRGPTPSRSYQNFITST.

Belongs to the dCTP deaminase family. Homotrimer.

It catalyses the reaction dCTP + 2 H2O = dUMP + NH4(+) + diphosphate. It functions in the pathway pyrimidine metabolism; dUMP biosynthesis; dUMP from dCTP: step 1/1. Functionally, bifunctional enzyme that catalyzes both the deamination of dCTP to dUTP and the hydrolysis of dUTP to dUMP without releasing the toxic dUTP intermediate. This chain is dCTP deaminase, dUMP-forming, found in Mycolicibacterium paratuberculosis (strain ATCC BAA-968 / K-10) (Mycobacterium paratuberculosis).